A 326-amino-acid chain; its full sequence is Vestitone reductase (326 aa).

Residues 12–18, Arg-37, and Tyr-164 contribute to the NADP(+) site; that span reads GGTGFLG.

The protein belongs to the NAD(P)-dependent epimerase/dehydratase family. Dihydroflavonol-4-reductase subfamily. Monomer. Detected in roots, and at lower levels in root nodules. Not detected in petioles, leaf and stem.

It catalyses the reaction a (3R,4R)-4,2'-dihydroxyisoflavan + NADP(+) = a (3R)-2'-hydroxyisoflavanone + NADPH + H(+). Inhibited by vestitone concentrations above 50 uM. Functionally, stereospecific enzyme that catalyzes the NADPH-dependent reduction of (3R)-vestitone to (3R,4R)-4'-methoxyisoflavan-2',4,7-triol (DMI). Has no activity with (3S)-vestitone. Catalyzes the penultimate step in the biosynthesis of the phytoalexin medicarpin, and thereby contributes to plant defense reactions. This chain is Vestitone reductase, found in Medicago sativa (Alfalfa).